Here is an 84-residue protein sequence, read N- to C-terminus: U1-hexatoxin-Iw1a (84 aa).

A signal peptide spans 1 to 18 (MLKFVVVICLVIMAITFA). Intrachain disulfides connect Cys-21–Cys-32, Cys-26–Cys-40, Cys-31–Cys-66, Cys-50–Cys-74, and Cys-68–Cys-81.

The protein belongs to the MIT-like AcTx family. Expressed by the venom gland.

It localises to the secreted. This chain is U1-hexatoxin-Iw1a, found in Illawarra wisharti (Illawarra funnel-web spider).